The primary structure comprises 189 residues: MTTDVRILGIDPGLRRTGWGLITARGSKLSYLACGVVTSDGDLPLALRLRELHEGLTRIVTTYTPDEVSVEETFVNKDAQATLKLGHARAVALLVPALAGLPVAEYAANLVKKTVAGNGHAEKVQIQAMVKFLLPKAEFKLADAADALAIAITHASHRGAIALDRRHAVAAGGGPGAARIAAALARLDR.

Residues aspartate 11, glutamate 71, and aspartate 143 contribute to the active site. Mg(2+) contacts are provided by aspartate 11, glutamate 71, and aspartate 143.

Belongs to the RuvC family. As to quaternary structure, homodimer which binds Holliday junction (HJ) DNA. The HJ becomes 2-fold symmetrical on binding to RuvC with unstacked arms; it has a different conformation from HJ DNA in complex with RuvA. In the full resolvosome a probable DNA-RuvA(4)-RuvB(12)-RuvC(2) complex forms which resolves the HJ. The cofactor is Mg(2+).

Its subcellular location is the cytoplasm. It catalyses the reaction Endonucleolytic cleavage at a junction such as a reciprocal single-stranded crossover between two homologous DNA duplexes (Holliday junction).. Its function is as follows. The RuvA-RuvB-RuvC complex processes Holliday junction (HJ) DNA during genetic recombination and DNA repair. Endonuclease that resolves HJ intermediates. Cleaves cruciform DNA by making single-stranded nicks across the HJ at symmetrical positions within the homologous arms, yielding a 5'-phosphate and a 3'-hydroxyl group; requires a central core of homology in the junction. The consensus cleavage sequence is 5'-(A/T)TT(C/G)-3'. Cleavage occurs on the 3'-side of the TT dinucleotide at the point of strand exchange. HJ branch migration catalyzed by RuvA-RuvB allows RuvC to scan DNA until it finds its consensus sequence, where it cleaves and resolves the cruciform DNA. This Methylorubrum extorquens (strain CM4 / NCIMB 13688) (Methylobacterium extorquens) protein is Crossover junction endodeoxyribonuclease RuvC.